Reading from the N-terminus, the 209-residue chain is Casparian strip membrane protein 1 (209 aa).

Residues 1–35 (MKTGESTAIDIAPETNNSGPIGKKKSTTPLLAAPV) are disordered. The Cytoplasmic segment spans residues 1 to 46 (MKTGESTAIDIAPETNNSGPIGKKKSTTPLLAAPVPDRGTHRMKRG). Residues 47-67 (LAIFDFVLRIGVLASALAAAA) traverse the membrane as a helical segment. The Extracellular portion of the chain corresponds to 68 to 96 (AMGTSEQTLPFFTQFFQFEASYDDLPTFQ). The chain crosses the membrane as a helical span at residues 97-117 (FFVVAMAVVAGYVVLSIPFSI). Over 118–129 (VCIIRPHAAGPR) the chain is Cytoplasmic. The helical transmembrane segment at 130 to 150 (VLLLILDSVALTLNTAAAGAA) threads the bilayer. At 151–182 (AAVVSLAHSGNSSTNWLAICNQFGDFCQQASG) the chain is on the extracellular side. Residue N161 is glycosylated (N-linked (GlcNAc...) asparagine). A helical transmembrane segment spans residues 183–203 (AVVGSFAAVLLFLLLILFSAL). Residues 204 to 209 (SLKNSH) are Cytoplasmic-facing.

The protein belongs to the Casparian strip membrane proteins (CASP) family. As to quaternary structure, homodimer and heterodimers.

Its subcellular location is the cell membrane. In terms of biological role, regulates membrane-cell wall junctions and localized cell wall deposition. Required for establishment of the Casparian strip membrane domain (CSD) and the subsequent formation of Casparian strips, a cell wall modification of the root endodermis that determines an apoplastic barrier between the intraorganismal apoplasm and the extraorganismal apoplasm and prevents lateral diffusion. In Cucumis melo (Muskmelon), this protein is Casparian strip membrane protein 1.